The chain runs to 150 residues: Large ribosomal subunit protein uL11 (150 aa).

This sequence belongs to the universal ribosomal protein uL11 family. Part of the ribosomal stalk of the 50S ribosomal subunit. Interacts with L10 and the large rRNA to form the base of the stalk. L10 forms an elongated spine to which L12 dimers bind in a sequential fashion forming a multimeric L10(L12)X complex. One or more lysine residues are methylated.

Forms part of the ribosomal stalk which helps the ribosome interact with GTP-bound translation factors. This Ureaplasma urealyticum serovar 10 (strain ATCC 33699 / Western) protein is Large ribosomal subunit protein uL11.